The chain runs to 95 residues: Integration host factor subunit beta (95 aa).

Positions 56–95 are disordered; sequence RAPRTGRNPKTGETVELDGKHVPHFKPGKELRDRVNESIA. Basic and acidic residues predominate over residues 72 to 95; the sequence is LDGKHVPHFKPGKELRDRVNESIA.

Belongs to the bacterial histone-like protein family. In terms of assembly, heterodimer of an alpha and a beta chain.

This protein is one of the two subunits of integration host factor, a specific DNA-binding protein that functions in genetic recombination as well as in transcriptional and translational control. The protein is Integration host factor subunit beta of Pseudoalteromonas translucida (strain TAC 125).